The sequence spans 149 residues: L-alanine exporter AlaE (149 aa).

Transmembrane regions (helical) follow at residues 16–36 (FAMV…LSGM), 46–66 (LVAI…RDLI), 83–105 (ADVL…TVGA), and 115–135 (SSNI…LDYC).

This sequence belongs to the AlaE exporter family.

It is found in the cell inner membrane. In terms of biological role, exports L-alanine. The protein is L-alanine exporter AlaE of Salmonella typhimurium (strain LT2 / SGSC1412 / ATCC 700720).